The following is a 296-amino-acid chain: Aquaporin NIP1-1 (296 aa).

N-acetylmethionine is present on Met-1. 2 helical membrane-spanning segments follow: residues 57–77 (LIAE…SVVV) and 84–104 (VVTL…LIYS). An NPA 1 motif is present at residues 114–116 (NPA). The next 3 helical transmembrane spans lie at 136-156 (VISQ…LFGL), 180-200 (AFTM…GVAT), and 205-225 (IGEL…LIAA). The short motif at 233–235 (NPG) is the NPA 2 element. The helical transmembrane segment at 249 to 269 (GIWIYLVAPTLGAIAGAWVYN) threads the bilayer. A Phosphoserine modification is found at Ser-286.

It belongs to the MIP/aquaporin (TC 1.A.8) family. NIP (TC 1.A.8.12) subfamily. In terms of tissue distribution, expressed in roots.

It is found in the membrane. Its function is as follows. Water channel probably required to promote glycerol permeability and water transport across cell membranes. In Arabidopsis thaliana (Mouse-ear cress), this protein is Aquaporin NIP1-1 (NIP1-1).